The sequence spans 260 residues: Hydroxyacylglutathione hydrolase (260 aa).

7 residues coordinate Zn(2+): H66, H68, D70, H71, H125, D150, and H188.

It belongs to the metallo-beta-lactamase superfamily. Glyoxalase II family. As to quaternary structure, monomer. Zn(2+) is required as a cofactor.

The enzyme catalyses an S-(2-hydroxyacyl)glutathione + H2O = a 2-hydroxy carboxylate + glutathione + H(+). The protein operates within secondary metabolite metabolism; methylglyoxal degradation; (R)-lactate from methylglyoxal: step 2/2. Thiolesterase that catalyzes the hydrolysis of S-D-lactoyl-glutathione to form glutathione and D-lactic acid. The protein is Hydroxyacylglutathione hydrolase of Prochlorococcus marinus (strain MIT 9303).